The sequence spans 107 residues: DNA-directed RNA polymerase subunit omega (107 aa).

It belongs to the RNA polymerase subunit omega family. The RNAP catalytic core consists of 2 alpha, 1 beta, 1 beta' and 1 omega subunit. When a sigma factor is associated with the core the holoenzyme is formed, which can initiate transcription.

It catalyses the reaction RNA(n) + a ribonucleoside 5'-triphosphate = RNA(n+1) + diphosphate. Its function is as follows. Promotes RNA polymerase assembly. Latches the N- and C-terminal regions of the beta' subunit thereby facilitating its interaction with the beta and alpha subunits. In Oenococcus oeni (strain ATCC BAA-331 / PSU-1), this protein is DNA-directed RNA polymerase subunit omega.